Consider the following 116-residue polypeptide: Large ribosomal subunit protein eL30 (116 aa).

It belongs to the eukaryotic ribosomal protein eL30 family. In terms of assembly, component of the large ribosomal subunit.

The protein resides in the cytoplasm. Its function is as follows. Component of the large ribosomal subunit. The ribosome is a large ribonucleoprotein complex responsible for the synthesis of proteins in the cell. The chain is Large ribosomal subunit protein eL30 (rpl30) from Ictalurus punctatus (Channel catfish).